The primary structure comprises 118 residues: Small ribosomal subunit protein uS13 (118 aa).

The interval glycine 94–lysine 118 is disordered.

The protein belongs to the universal ribosomal protein uS13 family. As to quaternary structure, part of the 30S ribosomal subunit. Forms a loose heterodimer with protein S19. Forms two bridges to the 50S subunit in the 70S ribosome.

In terms of biological role, located at the top of the head of the 30S subunit, it contacts several helices of the 16S rRNA. In the 70S ribosome it contacts the 23S rRNA (bridge B1a) and protein L5 of the 50S subunit (bridge B1b), connecting the 2 subunits; these bridges are implicated in subunit movement. Contacts the tRNAs in the A and P-sites. This chain is Small ribosomal subunit protein uS13, found in Thioalkalivibrio sulfidiphilus (strain HL-EbGR7).